A 452-amino-acid chain; its full sequence is GTPase Der (452 aa).

2 consecutive EngA-type G domains span residues 4–169 and 177–352; these read PIVA…PPPE and IKVA…EEHR. Residues 10–17, 57–61, 120–123, 183–190, 230–234, and 295–298 each bind GTP; these read GRPNVGKS, DTGGL, NKCE, DTAGI, and NKWD. Residues 353–438 form the KH-like domain; it reads RRVTTAVINE…PIRLLWRGKK (86 aa).

This sequence belongs to the TRAFAC class TrmE-Era-EngA-EngB-Septin-like GTPase superfamily. EngA (Der) GTPase family. In terms of assembly, associates with the 50S ribosomal subunit.

Functionally, GTPase that plays an essential role in the late steps of ribosome biogenesis. This is GTPase Der from Rippkaea orientalis (strain PCC 8801 / RF-1) (Cyanothece sp. (strain PCC 8801)).